We begin with the raw amino-acid sequence, 126 residues long: NADH-quinone oxidoreductase subunit A (126 aa).

Helical transmembrane passes span 16-36 (ILVLLAMAIGLGLILIAAAAI), 73-93 (ILFIIFDLEVAFLFPWAVAFG), and 95-115 (MSMTAFWSMMVFLSVLTVGFA).

The protein belongs to the complex I subunit 3 family. As to quaternary structure, NDH-1 is composed of 14 different subunits. Subunits NuoA, H, J, K, L, M, N constitute the membrane sector of the complex.

It localises to the cell inner membrane. The enzyme catalyses a quinone + NADH + 5 H(+)(in) = a quinol + NAD(+) + 4 H(+)(out). In terms of biological role, NDH-1 shuttles electrons from NADH, via FMN and iron-sulfur (Fe-S) centers, to quinones in the respiratory chain. The immediate electron acceptor for the enzyme in this species is believed to be ubiquinone. Couples the redox reaction to proton translocation (for every two electrons transferred, four hydrogen ions are translocated across the cytoplasmic membrane), and thus conserves the redox energy in a proton gradient. This is NADH-quinone oxidoreductase subunit A from Rhodobacter capsulatus (Rhodopseudomonas capsulata).